A 464-amino-acid chain; its full sequence is 3-isopropylmalate dehydratase large subunit (464 aa).

Residues C337, C397, and C400 each coordinate [4Fe-4S] cluster.

Belongs to the aconitase/IPM isomerase family. LeuC type 1 subfamily. As to quaternary structure, heterodimer of LeuC and LeuD. The cofactor is [4Fe-4S] cluster.

The enzyme catalyses (2R,3S)-3-isopropylmalate = (2S)-2-isopropylmalate. It functions in the pathway amino-acid biosynthesis; L-leucine biosynthesis; L-leucine from 3-methyl-2-oxobutanoate: step 2/4. Catalyzes the isomerization between 2-isopropylmalate and 3-isopropylmalate, via the formation of 2-isopropylmaleate. This is 3-isopropylmalate dehydratase large subunit from Bacillus cereus (strain G9842).